The sequence spans 344 residues: Anthranilate phosphoribosyltransferase (344 aa).

5-phospho-alpha-D-ribose 1-diphosphate contacts are provided by residues glycine 86, 89–90, threonine 94, 96–99, 114–122, and serine 126; these read GD, NIST, and KHGNKSASG. Glycine 86 contributes to the anthranilate binding site. Serine 98 contacts Mg(2+). Asparagine 117 provides a ligand contact to anthranilate. Arginine 172 contacts anthranilate. Aspartate 231 and glutamate 232 together coordinate Mg(2+).

The protein belongs to the anthranilate phosphoribosyltransferase family. As to quaternary structure, homodimer. The cofactor is Mg(2+).

It carries out the reaction N-(5-phospho-beta-D-ribosyl)anthranilate + diphosphate = 5-phospho-alpha-D-ribose 1-diphosphate + anthranilate. The protein operates within amino-acid biosynthesis; L-tryptophan biosynthesis; L-tryptophan from chorismate: step 2/5. Functionally, catalyzes the transfer of the phosphoribosyl group of 5-phosphorylribose-1-pyrophosphate (PRPP) to anthranilate to yield N-(5'-phosphoribosyl)-anthranilate (PRA). The sequence is that of Anthranilate phosphoribosyltransferase from Prochlorococcus marinus (strain MIT 9215).